A 721-amino-acid chain; its full sequence is Fatty acid oxidation complex subunit alpha (721 aa).

The interval 1–190 is enoyl-CoA hydratase/isomerase; that stretch reads MIYEGKAITV…KVGAVDAVVA (190 aa). Asp297 lines the substrate pocket. The 3-hydroxyacyl-CoA dehydrogenase stretch occupies residues 312–721; it reads KDVKQAAVLG…SFFGQASSEE (410 aa). Residues Met325, Asp344, 401 to 403, Lys408, and Ser430 each bind NAD(+); that span reads VVE. The active-site For 3-hydroxyacyl-CoA dehydrogenase activity is His451. Asn454 provides a ligand contact to NAD(+). Residues Asn501 and Tyr660 each coordinate substrate.

It in the N-terminal section; belongs to the enoyl-CoA hydratase/isomerase family. The protein in the C-terminal section; belongs to the 3-hydroxyacyl-CoA dehydrogenase family. In terms of assembly, heterotetramer of two alpha chains (FadB) and two beta chains (FadA).

The catalysed reaction is a (3S)-3-hydroxyacyl-CoA + NAD(+) = a 3-oxoacyl-CoA + NADH + H(+). It catalyses the reaction a (3S)-3-hydroxyacyl-CoA = a (2E)-enoyl-CoA + H2O. The enzyme catalyses a 4-saturated-(3S)-3-hydroxyacyl-CoA = a (3E)-enoyl-CoA + H2O. It carries out the reaction (3S)-3-hydroxybutanoyl-CoA = (3R)-3-hydroxybutanoyl-CoA. The catalysed reaction is a (3Z)-enoyl-CoA = a 4-saturated (2E)-enoyl-CoA. It catalyses the reaction a (3E)-enoyl-CoA = a 4-saturated (2E)-enoyl-CoA. The protein operates within lipid metabolism; fatty acid beta-oxidation. Functionally, involved in the aerobic and anaerobic degradation of long-chain fatty acids via beta-oxidation cycle. Catalyzes the formation of 3-oxoacyl-CoA from enoyl-CoA via L-3-hydroxyacyl-CoA. It can also use D-3-hydroxyacyl-CoA and cis-3-enoyl-CoA as substrate. This Pseudomonas savastanoi pv. phaseolicola (strain 1448A / Race 6) (Pseudomonas syringae pv. phaseolicola (strain 1448A / Race 6)) protein is Fatty acid oxidation complex subunit alpha.